The primary structure comprises 371 residues: N-acetyldiaminopimelate deacetylase (371 aa).

The active site involves aspartate 68. The Proton acceptor role is filled by glutamate 127.

This sequence belongs to the peptidase M20A family. N-acetyldiaminopimelate deacetylase subfamily.

The enzyme catalyses N-acetyl-(2S,6S)-2,6-diaminopimelate + H2O = (2S,6S)-2,6-diaminopimelate + acetate. It functions in the pathway amino-acid biosynthesis; L-lysine biosynthesis via DAP pathway; LL-2,6-diaminopimelate from (S)-tetrahydrodipicolinate (acetylase route): step 3/3. Catalyzes the conversion of N-acetyl-diaminopimelate to diaminopimelate and acetate. The chain is N-acetyldiaminopimelate deacetylase from Halalkalibacterium halodurans (strain ATCC BAA-125 / DSM 18197 / FERM 7344 / JCM 9153 / C-125) (Bacillus halodurans).